The sequence spans 492 residues: Transcript termination protein A18 (492 aa).

Positions 100 to 256 constitute a Helicase ATP-binding domain; sequence MIELKRPLYI…NSIINIAKLS (157 aa). 113 to 120 provides a ligand contact to ATP; sequence LACGFGKT. Residues 206–209 carry the DESH box motif; the sequence is DESH.

Belongs to the helicase family. Poxviruses subfamily. In terms of assembly, interacts with G2. Might be part of a transcription complex composed at least of G2, A18, and H5.

It is found in the virion. DNA helicase which seems to act as a postreplicative transcription termination factor. Involved in ATP-dependent release of nascent RNA. Forms a stable complex with single-stranded DNA, and to a lesser extent RNA. The protein is Transcript termination protein A18 of Bos taurus (Bovine).